A 376-amino-acid chain; its full sequence is Protein-glutamate methylesterase/protein-glutamine glutaminase 1 (376 aa).

In terms of domain architecture, Response regulatory spans Lys4 to Leu121. Residue Asp55 is modified to 4-aspartylphosphate. The interval Arg138–Ala169 is disordered. Polar residues predominate over residues Ala141 to Thr158. The 194-residue stretch at Ser183–Ala376 folds into the CheB-type methylesterase domain. Active-site residues include Ser195, His222, and Asp318.

Belongs to the CheB family. In terms of processing, phosphorylated by CheA. Phosphorylation of the N-terminal regulatory domain activates the methylesterase activity.

It localises to the cytoplasm. The enzyme catalyses [protein]-L-glutamate 5-O-methyl ester + H2O = L-glutamyl-[protein] + methanol + H(+). It catalyses the reaction L-glutaminyl-[protein] + H2O = L-glutamyl-[protein] + NH4(+). Its function is as follows. Involved in chemotaxis. Part of a chemotaxis signal transduction system that modulates chemotaxis in response to various stimuli. Catalyzes the demethylation of specific methylglutamate residues introduced into the chemoreceptors (methyl-accepting chemotaxis proteins or MCP) by CheR. Also mediates the irreversible deamidation of specific glutamine residues to glutamic acid. The chain is Protein-glutamate methylesterase/protein-glutamine glutaminase 1 from Vibrio vulnificus (strain YJ016).